Reading from the N-terminus, the 279-residue chain is Small ribosomal subunit protein uS3 (279 aa).

Residues 17–86 enclose the KH type-2 domain; it reads VDEYFLEKLE…NPQIDVQEVK (70 aa). Low complexity-rich tracts occupy residues 206 to 233 and 241 to 252; these read AEKKSPAAGAEPAKEAAAVPAPAESTAA and ESEAAEAVTPEG. A disordered region spans residues 206 to 279; that stretch reads AEKKSPAAGA…VVKTDGDSQS (74 aa).

Belongs to the universal ribosomal protein uS3 family. In terms of assembly, part of the 30S ribosomal subunit.

Binds the lower part of the 30S subunit head. This is Small ribosomal subunit protein uS3 from Methanocella arvoryzae (strain DSM 22066 / NBRC 105507 / MRE50).